Consider the following 283-residue polypeptide: Prepilin leader peptidase/N-methyltransferase (283 aa).

The next 7 membrane-spanning stretches (helical) occupy residues V13–I33, W106–W126, P128–I148, Q153–A173, F176–I196, L216–A236, and L259–G279.

This sequence belongs to the peptidase A24 family.

Its subcellular location is the cell inner membrane. The catalysed reaction is Typically cleaves a -Gly-|-Phe- bond to release an N-terminal, basic peptide of 5-8 residues from type IV prepilin, and then N-methylates the new N-terminal amino group, the methyl donor being S-adenosyl-L-methionine.. In terms of biological role, plays a role in type II pseudopili formation by proteolytically removing the leader sequence from substrate proteins and subsequently monomethylating the alpha-amino group of the newly exposed N-terminal phenylalanine. Substrates include proteins required for biogenesis of the type II general secretory apparatus. This chain is Prepilin leader peptidase/N-methyltransferase (outO), found in Dickeya chrysanthemi (Pectobacterium chrysanthemi).